A 941-amino-acid chain; its full sequence is Glycine dehydrogenase (decarboxylating) (941 aa).

Lys-692 bears the N6-(pyridoxal phosphate)lysine mark.

It belongs to the GcvP family. As to quaternary structure, the glycine cleavage system is composed of four proteins: P, T, L and H. It depends on pyridoxal 5'-phosphate as a cofactor.

It carries out the reaction N(6)-[(R)-lipoyl]-L-lysyl-[glycine-cleavage complex H protein] + glycine + H(+) = N(6)-[(R)-S(8)-aminomethyldihydrolipoyl]-L-lysyl-[glycine-cleavage complex H protein] + CO2. In terms of biological role, the glycine cleavage system catalyzes the degradation of glycine. The P protein binds the alpha-amino group of glycine through its pyridoxal phosphate cofactor; CO(2) is released and the remaining methylamine moiety is then transferred to the lipoamide cofactor of the H protein. This chain is Glycine dehydrogenase (decarboxylating), found in Mycobacterium bovis (strain ATCC BAA-935 / AF2122/97).